The following is a 376-amino-acid chain: N6-methyladenosine RNA methyltransferase MTA1 (376 aa).

A disordered region spans residues 53–78 (TRRLISSPPPETPFVTPEPKNGPSPL).

Belongs to the MT-A70-like family.

The catalysed reaction is an adenosine in mRNA + S-adenosyl-L-methionine = an N(6)-methyladenosine in mRNA + S-adenosyl-L-homocysteine + H(+). Its function is as follows. N6-methyladenosine RNA methyltransferase that plays a crucial role in fungal phenotypic traits, virulence, and stress tolerance. Mediates the methylation of mRNAs to produce N6-methyladenosine (m6A)-containing mRNAs. M6A is a modification present at internal sites of mRNAs and some non-coding RNAs and plays a role in mRNA stability and processing. Required for appressorium turgor pressure and regulates autophagosome formation during appressorium formation stage. Specifically, mediates the stability of ATG8 mRNA in a m6A-dependent manner via modification of the m6A site A982 located in 3'UTR region. The sequence is that of N6-methyladenosine RNA methyltransferase MTA1 from Pyricularia oryzae (strain 70-15 / ATCC MYA-4617 / FGSC 8958) (Rice blast fungus).